We begin with the raw amino-acid sequence, 347 residues long: Leucine-rich repeat-containing protein 69 (347 aa).

9 LRR repeats span residues 15–37, 38–60, 61–82, 84–105, 108–129, 131–152, 154–175, 177–198, and 200–222; these read NTKI…EKLP, NLKT…RTLT, QLTL…IKYL, SLKN…VFNG, RLIM…IGRL, SLTY…LCSL, HLSE…IKFL, NLQQ…ICHL, and KLRV…QNLR.

It belongs to the LRRC69 family.

This chain is Leucine-rich repeat-containing protein 69 (Lrrc69), found in Mus musculus (Mouse).